Here is a 706-residue protein sequence, read N- to C-terminus: Elongation factor G (706 aa).

The tr-type G domain occupies 8–290 (KRYRNIGIVA…GVIEYMPSPT (283 aa)). Residues 17-24 (AHVDAGKT), 88-92 (DTPGH), and 142-145 (NKMD) each bind GTP.

Belongs to the TRAFAC class translation factor GTPase superfamily. Classic translation factor GTPase family. EF-G/EF-2 subfamily.

The protein resides in the cytoplasm. Catalyzes the GTP-dependent ribosomal translocation step during translation elongation. During this step, the ribosome changes from the pre-translocational (PRE) to the post-translocational (POST) state as the newly formed A-site-bound peptidyl-tRNA and P-site-bound deacylated tRNA move to the P and E sites, respectively. Catalyzes the coordinated movement of the two tRNA molecules, the mRNA and conformational changes in the ribosome. The protein is Elongation factor G of Chromohalobacter salexigens (strain ATCC BAA-138 / DSM 3043 / CIP 106854 / NCIMB 13768 / 1H11).